Consider the following 247-residue polypeptide: ATP synthase subunit a, chloroplastic (247 aa).

The next 5 helical transmembrane spans lie at 38 to 58 (QVLITSWVVIAILLGSATLAV), 95 to 115 (VPFIGTMFLFIFVSNWSGALL), 134 to 154 (INTTVALALLTSVAYFYAGIS), 199 to 219 (LVVVVLVSLVPLVVPIPVMFL), and 220 to 240 (GLFTSGIQALIFATLAAAYIG).

The protein belongs to the ATPase A chain family. In terms of assembly, F-type ATPases have 2 components, CF(1) - the catalytic core - and CF(0) - the membrane proton channel. CF(1) has five subunits: alpha(3), beta(3), gamma(1), delta(1), epsilon(1). CF(0) has four main subunits: a, b, b' and c.

The protein resides in the plastid. It is found in the chloroplast thylakoid membrane. Key component of the proton channel; it plays a direct role in the translocation of protons across the membrane. This Daucus carota (Wild carrot) protein is ATP synthase subunit a, chloroplastic.